The primary structure comprises 368 residues: Ribosomal RNA large subunit methyltransferase M (368 aa).

S-adenosyl-L-methionine contacts are provided by residues S192, 225-228 (APGG), D244, D264, and D281. Residue K310 is the Proton acceptor of the active site.

It belongs to the class I-like SAM-binding methyltransferase superfamily. RNA methyltransferase RlmE family. RlmM subfamily. Monomer.

It localises to the cytoplasm. It carries out the reaction cytidine(2498) in 23S rRNA + S-adenosyl-L-methionine = 2'-O-methylcytidine(2498) in 23S rRNA + S-adenosyl-L-homocysteine + H(+). Its function is as follows. Catalyzes the 2'-O-methylation at nucleotide C2498 in 23S rRNA. This Colwellia psychrerythraea (strain 34H / ATCC BAA-681) (Vibrio psychroerythus) protein is Ribosomal RNA large subunit methyltransferase M.